The following is a 164-amino-acid chain: Transcription antitermination protein NusB (164 aa).

The protein belongs to the NusB family.

Functionally, involved in transcription antitermination. Required for transcription of ribosomal RNA (rRNA) genes. Binds specifically to the boxA antiterminator sequence of the ribosomal RNA (rrn) operons. This is Transcription antitermination protein NusB from Desulfovibrio desulfuricans (strain ATCC 27774 / DSM 6949 / MB).